The chain runs to 246 residues: Probable S-methyl-5'-thioinosine phosphorylase (246 aa).

Phosphate-binding positions include Thr10 and 52-53; that span reads RH. Substrate is bound at residue Met185. Thr186 is a binding site for phosphate. Substrate is bound at residue 209 to 211; that stretch reads NPA.

It belongs to the PNP/MTAP phosphorylase family. MTAP subfamily. Homotrimer.

It carries out the reaction S-methyl-5'-thioinosine + phosphate = 5-(methylsulfanyl)-alpha-D-ribose 1-phosphate + hypoxanthine. It functions in the pathway purine metabolism; purine nucleoside salvage. Its function is as follows. Catalyzes the reversible phosphorylation of S-methyl-5'-thioinosine (MTI) to hypoxanthine and 5-methylthioribose-1-phosphate. Involved in the breakdown of S-methyl-5'-thioadenosine (MTA), a major by-product of polyamine biosynthesis. Catabolism of (MTA) occurs via deamination to MTI and phosphorolysis to hypoxanthine. The polypeptide is Probable S-methyl-5'-thioinosine phosphorylase (Pseudomonas syringae pv. tomato (strain ATCC BAA-871 / DC3000)).